Here is a 906-residue protein sequence, read N- to C-terminus: Cadherin-2 (906 aa).

The N-terminal stretch at 1-25 (MCRIAGAPRTLLPLLAALLQASVEA) is a signal peptide. Residues 26-159 (SGEIALCKTG…HSGALQRQKR (134 aa)) constitute a propeptide that is removed on maturation. Cadherin domains follow at residues 160-267 (DWVI…RPEF), 268-382 (LHQV…PPEF), 383-497 (TAMT…NPYF), 498-603 (APNP…DNAP), and 604-717 (QVLP…RIVG). The Extracellular portion of the chain corresponds to 160–724 (DWVIPPINLP…IVGAGLGTGA (565 aa)). Ca(2+) is bound at residue Glu-170. Asn-190 carries an N-linked (GlcNAc...) asparagine glycan. Positions 226, 228, 259, 260, 261, 262, and 263 each coordinate Ca(2+). Asn-273 carries an N-linked (GlcNAc...) asparagine glycan. Ca(2+)-binding residues include Asp-293, Asp-295, and Asn-301. Asn-325 carries N-linked (GlcNAc...) asparagine glycosylation. Position 353 (Asp-353) interacts with Ca(2+). N-linked (GlcNAc...) asparagine glycosylation is found at Asn-402, Asn-572, Asn-651, and Asn-692. Residues 725 to 745 (IIAILLCIIILLILVLMFVVW) form a helical membrane-spanning segment. Residues 746–906 (MKRRDKERQA…LADMYGGGDD (161 aa)) lie on the Cytoplasmic side of the membrane. The span at 863–880 (SGSTAGSLSSLNSSSSGG) shows a compositional bias: low complexity. Positions 863 to 883 (SGSTAGSLSSLNSSSSGGDQD) are disordered.

As to quaternary structure, homodimer (via extracellular region). Can also form heterodimers with other cadherins (via extracellular region). Dimerization occurs in trans, i.e. with a cadherin chain from another cell. Interacts with CDCP1. Interacts with PCDH8; this complex may also include TAOK2. The interaction with PCDH8 may lead to internalization through TAOK2/p38 MAPK pathway. Identified in a complex containing FGFR4, NCAM1, CDH2, PLCG1, FRS2, SRC, SHC1, GAP43 and CTTN. May interact with OBSCN (via protein kinase domain 2). Interacts with FBXO45. Cleaved by MMP24. Ectodomain cleavage leads to the generation of a soluble 90 kDa N-terminal soluble fragment and a 45 kDa membrane-bound C-terminal fragment 1 (CTF1), which is further cleaved by gamma-secretase into a 35 kDa. Cleavage in neural stem cells by MMP24 affects CDH2-mediated anchorage of neural stem cells to ependymocytes in the adult subependymal zone, leading to modulate neural stem cell quiescence. Post-translationally, may be phosphorylated by OBSCN. In terms of processing, O-glycosylated on Ser and Thr residues. As to expression, expressed in cardiac muscle (at protein level).

It localises to the cell membrane. Its subcellular location is the sarcolemma. The protein resides in the cell junction. The protein localises to the adherens junction. It is found in the desmosome. It localises to the cell surface. Calcium-dependent cell adhesion protein; preferentially mediates homotypic cell-cell adhesion by dimerization with a CDH2 chain from another cell. Cadherins may thus contribute to the sorting of heterogeneous cell types. Acts as a regulator of neural stem cells quiescence by mediating anchorage of neural stem cells to ependymocytes in the adult subependymal zone: upon cleavage by MMP24, CDH2-mediated anchorage is affected, leading to modulate neural stem cell quiescence. Plays a role in cell-to-cell junction formation between pancreatic beta cells and neural crest stem (NCS) cells, promoting the formation of processes by NCS cells. Required for proper neurite branching. Required for pre- and postsynaptic organization. CDH2 may be involved in neuronal recognition mechanism. In hippocampal neurons, may regulate dendritic spine density. The sequence is that of Cadherin-2 (Cdh2) from Mus musculus (Mouse).